Here is a 187-residue protein sequence, read N- to C-terminus: Calcium and integrin-binding family member 2 (187 aa).

EF-hand domains are found at residues 66–101 (RENP…LCES), 103–138 (PREL…LTKS), and 144–179 (EVVL…APDF). Residues Asp-116, Asn-118, Asp-120, Asp-127, Asp-157, Asp-159, Asp-161, Lys-163, and Asp-168 each contribute to the Ca(2+) site.

In terms of assembly, monomer. Homodimer. Interacts with WHRN and MYO7A. Interacts with ITGA2B (via C-terminus cytoplasmic tail region); the interactions are stabilized/increased in a calcium and magnesium-dependent manner. Interacts with ITGA7 (via C-terminus cytoplasmic tail region); the interactions are stabilized/increased in a calcium and magnesium-dependent manner. Interacts with TMC1. Interacts with TMC2.

The protein localises to the cytoplasm. It is found in the cell projection. It localises to the stereocilium. Its subcellular location is the photoreceptor inner segment. The protein resides in the cilium. The protein localises to the photoreceptor outer segment. It is found in the cell membrane. It localises to the sarcolemma. Functionally, calcium- and integrin-binding protein that plays a role in intracellular calcium homeostasis. Acts as an auxiliary subunit of the sensory mechanoelectrical transduction (MET) channel in hair cells. Essential for mechanoelectrical transduction (MET) currents in auditory hair cells and thereby required for hearing. Regulates the function of hair cell mechanotransduction by controlling the distribution of transmembrane channel-like proteins TMC1 and TMC2, and by regulating the function of the MET channels in hair cells. Required for the maintenance of auditory hair cell stereocilia bundle morphology and function and for hair-cell survival in the cochlea. Critical for proper photoreceptor cell maintenance and function. Plays a role in intracellular calcium homeostasis by decreasing ATP-induced calcium release. The protein is Calcium and integrin-binding family member 2 (Cib2) of Rattus norvegicus (Rat).